Consider the following 322-residue polypeptide: Eukaryotic translation initiation factor 3 subunit I (322 aa).

WD repeat units follow at residues 4-43, 46-85, 141-180, 184-223, and 281-322; these read GHER…RLGT, GHQG…VIAS, MTES…KVVD, DHTG…CLKT, and GHFG…NIFE.

Belongs to the eIF-3 subunit I family. As to quaternary structure, component of the eukaryotic translation initiation factor 3 (eIF-3) complex. The eIF-3 complex interacts with pix.

Its subcellular location is the cytoplasm. In terms of biological role, component of the eukaryotic translation initiation factor 3 (eIF-3) complex, which is involved in protein synthesis of a specialized repertoire of mRNAs and, together with other initiation factors, stimulates binding of mRNA and methionyl-tRNAi to the 40S ribosome. The eIF-3 complex specifically targets and initiates translation of a subset of mRNAs involved in cell proliferation. This chain is Eukaryotic translation initiation factor 3 subunit I, found in Drosophila willistoni (Fruit fly).